The primary structure comprises 882 residues: DNA mismatch repair protein MutS (882 aa).

627-634 is a binding site for ATP; that stretch reads GPNMAGKS.

This sequence belongs to the DNA mismatch repair MutS family.

Functionally, this protein is involved in the repair of mismatches in DNA. It is possible that it carries out the mismatch recognition step. This protein has a weak ATPase activity. The protein is DNA mismatch repair protein MutS of Anaeromyxobacter dehalogenans (strain 2CP-1 / ATCC BAA-258).